The primary structure comprises 224 residues: UPF0758 protein RSc2444 (224 aa).

The MPN domain occupies 102–224; that stretch reads TLESPQSVKD…VYSFLEHGKM (123 aa). Positions 173, 175, and 186 each coordinate Zn(2+). The JAMM motif motif lies at 173–186; sequence HNHPTGHVEPSESD.

This sequence belongs to the UPF0758 family.

The protein is UPF0758 protein RSc2444 of Ralstonia nicotianae (strain ATCC BAA-1114 / GMI1000) (Ralstonia solanacearum).